We begin with the raw amino-acid sequence, 319 residues long: Ribonucleoside-diphosphate reductase small chain (319 aa).

Fe cation-binding residues include Asp70, Glu101, and His104. Tyr108 is an active-site residue. Positions 163, 197, and 200 each coordinate Fe cation. Residues 313–319 (FSLDVDF) are interaction with R1.

It belongs to the ribonucleoside diphosphate reductase small chain family. As to quaternary structure, interacts with RNR1/OPG080 subunit. Can interact with host RNR1 supunit. Fe cation is required as a cofactor.

The catalysed reaction is a 2'-deoxyribonucleoside 5'-diphosphate + [thioredoxin]-disulfide + H2O = a ribonucleoside 5'-diphosphate + [thioredoxin]-dithiol. In terms of biological role, ribonucleoside-diphosphate reductase holoenzyme provides the precursors necessary for viral DNA synthesis. Allows virus growth in non-dividing cells. Catalyzes the biosynthesis of deoxyribonucleotides from the corresponding ribonucleotides. In Bos taurus (Bovine), this protein is Ribonucleoside-diphosphate reductase small chain (OPG048).